The sequence spans 725 residues: ATP-dependent rRNA helicase SPB4 (725 aa).

Residues 15–43 carry the Q motif motif; the sequence is WAKLNPPLSPWILDVINSMGFKNMTPVQA. A Helicase ATP-binding domain is found at 46–260; that stretch reads IPRAVKNQDC…GLGLRNPVRI (215 aa). 59–66 is a binding site for ATP; sequence AVTGSGKT. Residues 119–156 are disordered; that stretch reads ESEEETGDVEAHAPPFASSSRSPSPQTPDKPLFPLPML. Positions 132–142 are enriched in low complexity; sequence PPFASSSRSPS. Residues 143 to 152 show a composition bias toward pro residues; the sequence is PQTPDKPLFP. Residues 207 to 210 carry the DEAD box motif; that stretch reads DEAD. Positions 295-458 constitute a Helicase C-terminal domain; it reads KTLQLIRLLL…YINAYLEEVD (164 aa). The segment at 591–725 is disordered; the sequence is AQRADNQSSN…IGGGMFDDLE (135 aa). Composition is skewed to basic and acidic residues over residues 603–646 and 685–707; these read ARAE…KYEW and EIGK…KESS. Positions 709–725 are enriched in gly residues; that stretch reads GGAGGGGIGGGMFDDLE.

Belongs to the DEAD box helicase family. DDX55/SPB4 subfamily. In terms of assembly, component of pre-60S ribosomal complexes.

The protein resides in the nucleus. The protein localises to the nucleolus. The catalysed reaction is ATP + H2O = ADP + phosphate + H(+). In terms of biological role, ATP-binding RNA helicase involved in the biogenesis of 60S ribosomal subunits. Binds 90S pre-ribosomal particles and dissociates from pre-60S ribosomal particles after processing of 27SB pre-rRNA. Required for the normal formation of 18S rRNA through the processing of pre-rRNAs at sites A0, A1 and A2, and the normal formation of 25S and 5.8S rRNAs through the processing of pre-rRNAs at sites C1 and C2. The chain is ATP-dependent rRNA helicase SPB4 from Cryptococcus neoformans var. neoformans serotype D (strain JEC21 / ATCC MYA-565) (Filobasidiella neoformans).